The chain runs to 402 residues: 4-hydroxy-3-methylbut-2-enyl diphosphate reductase (402 aa).

Cys-66 lines the [4Fe-4S] cluster pocket. His-96 serves as a coordination point for (2E)-4-hydroxy-3-methylbut-2-enyl diphosphate. Residue His-96 coordinates dimethylallyl diphosphate. Residue His-96 coordinates isopentenyl diphosphate. [4Fe-4S] cluster is bound at residue Cys-157. Residue His-185 coordinates (2E)-4-hydroxy-3-methylbut-2-enyl diphosphate. His-185 provides a ligand contact to dimethylallyl diphosphate. His-185 serves as a coordination point for isopentenyl diphosphate. The active-site Proton donor is the Glu-187. Thr-250 contributes to the (2E)-4-hydroxy-3-methylbut-2-enyl diphosphate binding site. Cys-288 serves as a coordination point for [4Fe-4S] cluster. The (2E)-4-hydroxy-3-methylbut-2-enyl diphosphate site is built by Ser-317, Ser-318, Asn-319, and Ser-379. Residues Ser-317, Ser-318, Asn-319, and Ser-379 each contribute to the dimethylallyl diphosphate site. Isopentenyl diphosphate is bound by residues Ser-317, Ser-318, Asn-319, and Ser-379.

This sequence belongs to the IspH family. It depends on [4Fe-4S] cluster as a cofactor.

It catalyses the reaction isopentenyl diphosphate + 2 oxidized [2Fe-2S]-[ferredoxin] + H2O = (2E)-4-hydroxy-3-methylbut-2-enyl diphosphate + 2 reduced [2Fe-2S]-[ferredoxin] + 2 H(+). It carries out the reaction dimethylallyl diphosphate + 2 oxidized [2Fe-2S]-[ferredoxin] + H2O = (2E)-4-hydroxy-3-methylbut-2-enyl diphosphate + 2 reduced [2Fe-2S]-[ferredoxin] + 2 H(+). The protein operates within isoprenoid biosynthesis; dimethylallyl diphosphate biosynthesis; dimethylallyl diphosphate from (2E)-4-hydroxy-3-methylbutenyl diphosphate: step 1/1. It participates in isoprenoid biosynthesis; isopentenyl diphosphate biosynthesis via DXP pathway; isopentenyl diphosphate from 1-deoxy-D-xylulose 5-phosphate: step 6/6. Catalyzes the conversion of 1-hydroxy-2-methyl-2-(E)-butenyl 4-diphosphate (HMBPP) into a mixture of isopentenyl diphosphate (IPP) and dimethylallyl diphosphate (DMAPP). Acts in the terminal step of the DOXP/MEP pathway for isoprenoid precursor biosynthesis. This is 4-hydroxy-3-methylbut-2-enyl diphosphate reductase from Thermosynechococcus vestitus (strain NIES-2133 / IAM M-273 / BP-1).